Consider the following 186-residue polypeptide: uncharacterized protein (186 aa).

An N-linked (GlcNAc...) asparagine; by host glycan is attached at asparagine 34. Transmembrane regions (helical) follow at residues 47-67 (IGMVVSSLMLLLVYFCFATTF), 114-134 (ILETVGFGLLHLKIALVIVLL), and 144-164 (LEMIYNKIVYFDTIGFYTLFF).

It localises to the membrane. This is an uncharacterized protein from Acanthamoeba polyphaga mimivirus (APMV).